Reading from the N-terminus, the 634-residue chain is Sodium-dependent neutral amino acid transporter B(0)AT1 (634 aa).

Topologically, residues 1-41 are cytoplasmic; sequence MVRLVLPNPGLEDRIPSLDELEVIEKEEASSRPKWDNKAQY. At S17 the chain carries Phosphoserine. A helical membrane pass occupies residues 42 to 62; the sequence is MLTCVGFCVGLGNVWRFPYLC. The Extracellular segment spans residues 63-65; sequence QSH. A helical membrane pass occupies residues 66–86; it reads GGGAFMIPFLILLVLEGIPLL. Residues 87 to 119 lie on the Cytoplasmic side of the membrane; it reads HLEFAIGQRLRKGSVGVWSSIHPALKGVGIASM. Residues 120-140 traverse the membrane as a helical segment; the sequence is FVSFMVGLYYNTIIAWVMWYF. Over 141 to 192 the chain is Extracellular; the sequence is FNSFQEPLPWSECPLNQNQTGYVEECAKSSSVDYFWYRETLNISTSISDSGS. N-linked (GlcNAc...) asparagine glycans are attached at residues N158 and N182. Residues 193 to 213 traverse the membrane as a helical segment; that stretch reads IQWWILLCLTCAWSVLYVCTI. Residues 214 to 221 are Cytoplasmic-facing; that stretch reads RGIETTGK. Residues 222-242 form a helical membrane-spanning segment; the sequence is AVYITSTLPYVVLTIFLIRGL. Over 243–268 the chain is Extracellular; sequence TLKGATNGIVFLFTPNITELSNPNTW. A glycan (N-linked (GlcNAc...) asparagine) is linked at N258. Residues 269–289 traverse the membrane as a helical segment; sequence LDAGAQVFYSFSLAFGGLISF. The Cytoplasmic portion of the chain corresponds to 290-304; that stretch reads SSYNSVHNNCEMDSV. The helical transmembrane segment at 305-325 threads the bilayer; it reads IVSIINGFTSVYAATVVYSII. Over 326–413 the chain is Extracellular; the sequence is GFRATERFDD…TEAITKMPVS (88 aa). N-linked (GlcNAc...) asparagine glycans are attached at residues N354 and N368. Residues 414–434 form a helical membrane-spanning segment; the sequence is PLWSVLFFIMLFCLGLSSMFG. At 435-456 the chain is on the cytoplasmic side; sequence NMEGVVVPLQDLNITPKKWPKE. A helical transmembrane segment spans residues 457-477; that stretch reads LLTGLICLGTYLIAFIFTLNS. At 478 to 490 the chain is on the extracellular side; it reads GQYWLSLLDSYAG. The helical transmembrane segment at 491 to 511 threads the bilayer; the sequence is SIPLLIIAFCEMFAVVYVYGV. At 512–531 the chain is on the cytoplasmic side; that stretch reads DRFNKDIEFMIGHKPNIFWQ. Residues 532–552 form a helical membrane-spanning segment; it reads VTWRVVSPLIMLVIFLFFFVI. Topologically, residues 553–581 are extracellular; sequence EVNKQLMYSVWDPDYEEFPKSQKVPYPDW. Residues 582 to 602 form a helical membrane-spanning segment; the sequence is VYAVVVIVAGVPCLTIPCFAI. Residues 603–634 lie on the Cytoplasmic side of the membrane; sequence YKLIRNYCQKSGDQHGLVNALSTASVNGDLKN. A Phosphoserine modification is found at S627.

This sequence belongs to the sodium:neurotransmitter symporter (SNF) (TC 2.A.22) family. SLC6A19 subfamily. As to quaternary structure, interacts in a tissue-specific manner with ACE2 in small intestine and with CLTRN in the kidney. Interacts with CLTRN; this interaction is required for trafficking of SLC6A19 to the plasma membrane and for its catalytic activation in kidneys. Interacts with ACE2; this interaction is required for trafficking of SLC6A19 to the plasma membrane and for its catalytic activation in intestine. Interacts with ANPEP; the interaction positively regulates its amino acid transporter activity.

The protein resides in the membrane. The enzyme catalyses L-alanine(in) + Na(+)(in) = L-alanine(out) + Na(+)(out). It carries out the reaction L-cysteine(in) + Na(+)(in) = L-cysteine(out) + Na(+)(out). The catalysed reaction is L-glutamine(in) + Na(+)(in) = L-glutamine(out) + Na(+)(out). It catalyses the reaction glycine(in) + Na(+)(in) = glycine(out) + Na(+)(out). The enzyme catalyses L-isoleucine(in) + Na(+)(in) = L-isoleucine(out) + Na(+)(out). It carries out the reaction L-leucine(in) + Na(+)(in) = L-leucine(out) + Na(+)(out). The catalysed reaction is L-methionine(in) + Na(+)(in) = L-methionine(out) + Na(+)(out). It catalyses the reaction L-phenylalanine(in) + Na(+)(in) = L-phenylalanine(out) + Na(+)(out). The enzyme catalyses L-serine(in) + Na(+)(in) = L-serine(out) + Na(+)(out). It carries out the reaction L-tryptophan(in) + Na(+)(in) = L-tryptophan(out) + Na(+)(out). The catalysed reaction is L-tyrosine(in) + Na(+)(in) = L-tyrosine(out) + Na(+)(out). It catalyses the reaction L-valine(in) + Na(+)(in) = L-valine(out) + Na(+)(out). In terms of biological role, transporter that mediates resorption of neutral amino acids across the apical membrane of renal and intestinal epithelial cells. This uptake is sodium-dependent and chloride-independent. Requires CLTRN in kidney or ACE2 in intestine for cell surface expression and amino acid transporter activity. This chain is Sodium-dependent neutral amino acid transporter B(0)AT1, found in Rattus norvegicus (Rat).